We begin with the raw amino-acid sequence, 229 residues long: Cytochrome b6-f complex iron-sulfur subunit, chloroplastic (229 aa).

The transit peptide at 1 to 50 (MASSSLSPATQLGSSRSALMAMSSGLFVKPTKMNHQMVRKEKIGLRISCQ) directs the protein to the chloroplast. A helical transmembrane segment spans residues 68–90 (LNLLLLGALSLPTGYMLVPYATF). The 97-residue stretch at 115 to 211 (AAEWLKTHGP…ADIDEAGKVL (97 aa)) folds into the Rieske domain. Positions 157, 159, 175, and 178 each coordinate [2Fe-2S] cluster. Residues C162 and C177 are joined by a disulfide bond. S196 is modified (phosphoserine).

The protein belongs to the Rieske iron-sulfur protein family. As to quaternary structure, the 4 large subunits of the cytochrome b6-f complex are cytochrome b6, subunit IV (17 kDa polypeptide, petD), cytochrome f and the Rieske protein, while the 4 small subunits are petG, petL, petM and petN. The complex functions as a dimer. Interacts with PGRL1A. Component of a mitochondrial large protein complex that contains, at least, MIC60, DGS1, TOM40, TOM20 proteins, and petC/RISP. [2Fe-2S] cluster serves as cofactor. In terms of tissue distribution, confined to photosynthetic tissues, with highest levels in flowers. In leaves, mostly localized in mesophyll cells. In stems, confined to the peripheral ring of chlorenchyma and adjoining groups of cells associated with the vascular bundles. In siliques, present in green wall of the fruit and in peduncle but not in the translucide white septum of the seeds.

Its subcellular location is the plastid. The protein localises to the chloroplast thylakoid membrane. The protein resides in the mitochondrion inner membrane. The catalysed reaction is 2 oxidized [plastocyanin] + a plastoquinol + 2 H(+)(in) = 2 reduced [plastocyanin] + a plastoquinone + 4 H(+)(out). Functionally, essential protein for photoautotrophism. Confers resistance to photo-oxidative damages by contributing to the thermal dissipation of light energy and to lumenal acidification (increase of pH gradient). Component of the cytochrome b6-f complex, which mediates electron transfer between photosystem II (PSII) and photosystem I (PSI), cyclic electron flow around PSI, and state transitions. The polypeptide is Cytochrome b6-f complex iron-sulfur subunit, chloroplastic (Arabidopsis thaliana (Mouse-ear cress)).